The chain runs to 887 residues: Phosphatidylinositol 3-kinase catalytic subunit type 3 (887 aa).

Positions 35-184 (YKAVLEDPML…LAKLTKAHRQ (150 aa)) constitute a C2 PI3K-type domain. Residues 149–170 (VEADGSEPTKTPGRTSSTLSED) form a disordered region. The span at 156–170 (PTKTPGRTSSTLSED) shows a compositional bias: polar residues. Residue threonine 163 is modified to Phosphothreonine; by AMPK. Phosphoserine; by AMPK is present on serine 165. Phosphoserine is present on residues serine 244, serine 261, and serine 282. Residues 283-520 (DHDLKPNAAT…PKTHEMYLNV (238 aa)) form the PIK helical domain. The tract at residues 447–467 (TSPLPSVSSPPPASKTKEVPD) is disordered. The PI3K/PI4K catalytic domain maps to 605 to 871 (IPETATLFKS…LIDESVHALF (267 aa)). The G-loop stretch occupies residues 611-617 (LFKSALM). Residues 740 to 748 (GVGDRHLDN) are catalytic loop. Residues 759-780 (HIDFGYILGRDPKPLPPPMKLN) are activation loop.

This sequence belongs to the PI3/PI4-kinase family. As to quaternary structure, component of the PI3K (PI3KC3/PI3K-III/class III phosphatidylinositol 3-kinase) complex the core of which is composed of the catalytic subunit PIK3C3, the regulatory subunit PIK3R4 and BECN1 associating with additional regulatory/auxiliary subunits to form alternative complex forms. Alternative complex forms containing a fourth regulatory subunit in a mutually exclusive manner are: the PI3K complex I (PI3KC3-C1) containing ATG14, and the PI3K complex II (PI3KC3-C2) containing UVRAG. PI3KC3-C1 displays a V-shaped architecture with PIK3R4 serving as a bridge between PIK3C3 and the ATG14:BECN1 subcomplex. Both, PI3KC3-C1 and PI3KC3-C2, can associate with further regulatory subunits such as RUBCN, SH3GLB1/Bif-1 and AMBRA1. PI3KC3-C1 probably associates with PIK3CB. Interacts with RAB7A in the presence of PIK3R4. Interacts with AMBRA1. Interacts with BECN1P1/BECN2. Interacts with SLAMF1. May be a component of a complex composed of RAB5A (in GDP-bound form), DYN2 and PIK3C3. Interacts with NCKAP1L. Interacts with ATG14; this interaction is increased in the absence of TMEM39A. Interacts with STEEP1; the interaction is STING1-dependent and required for trafficking of STING1 from the endoplasmic reticulum. Interacts with YWHAG. Interacts with ARMC3. Mn(2+) is required as a cofactor. Ubiquitinated via 'Lys-29'- and 'Lys-48'-linked ubiquitination by UBE3C, promoting its degradation. Deubiquitination by ZRANB1/TRABID promotes its stabilization, leading to autophagosome maturation. As to expression, ubiquitously expressed, with a highest expression in skeletal muscle.

The protein resides in the midbody. It localises to the late endosome. It is found in the cytoplasmic vesicle. The protein localises to the autophagosome. It catalyses the reaction a 1,2-diacyl-sn-glycero-3-phospho-(1D-myo-inositol) + ATP = a 1,2-diacyl-sn-glycero-3-phospho-(1D-myo-inositol-3-phosphate) + ADP + H(+). Catalytic subunit of the PI3K complex that mediates formation of phosphatidylinositol 3-phosphate; different complex forms are believed to play a role in multiple membrane trafficking pathways: PI3KC3-C1 is involved in initiation of autophagosomes and PI3KC3-C2 in maturation of autophagosomes and endocytosis. As part of PI3KC3-C1, promotes endoplasmic reticulum membrane curvature formation prior to vesicle budding. Involved in regulation of degradative endocytic trafficking and required for the abscission step in cytokinesis, probably in the context of PI3KC3-C2. Involved in the transport of lysosomal enzyme precursors to lysosomes. Required for transport from early to late endosomes. In terms of biological role, (Microbial infection) Kinase activity is required for SARS coronavirus-2/SARS-CoV-2 replication. The protein is Phosphatidylinositol 3-kinase catalytic subunit type 3 of Homo sapiens (Human).